A 264-amino-acid chain; its full sequence is Teichoic acids export ATP-binding protein TagH (264 aa).

One can recognise an ABC transporter domain in the interval 5-243 (VNIKNVTKEY…YEAFLNDFKK (239 aa)). ATP is bound at residue 57-64 (GINGSGKS).

Belongs to the ABC transporter superfamily. Teichoic acids exporter (TC 3.A.1.104.1) family. In terms of assembly, the complex is composed of two ATP-binding proteins (TagH) and two transmembrane proteins (TagG).

The protein resides in the cell membrane. The catalysed reaction is ATP + H2O + teichoic acidSide 1 = ADP + phosphate + teichoic acidSide 2.. Its function is as follows. Part of the ABC transporter complex TagGH involved in teichoic acids export. Responsible for energy coupling to the transport system. In Staphylococcus aureus (strain USA300), this protein is Teichoic acids export ATP-binding protein TagH.